The following is a 338-amino-acid chain: HTH-type transcriptional regulator SyrM 1 (338 aa).

One can recognise an HTH lysR-type domain in the interval 35–92 (LDLNTLLALEALLEHRNVTQAARHLGLSQPSVSRALIRLRGVFNDDLLVRGSSGMVPT). A DNA-binding region (H-T-H motif) is located at residues 52–72 (VTQAARHLGLSQPSVSRALIR).

It belongs to the LysR transcriptional regulatory family.

In terms of biological role, transcriptional activator that regulates the expression of genes involved in symbiosis. Among other targets it acts on the nolWBTUV operon. The polypeptide is HTH-type transcriptional regulator SyrM 1 (syrM1) (Sinorhizobium fredii (strain NBRC 101917 / NGR234)).